Consider the following 707-residue polypeptide: Glucose starvation modulator protein 1 (707 aa).

Residues C20–C48 constitute a DNA-binding region (zn(2)-C6 fungal-type). Disordered regions lie at residues N63 to L122, Q154 to S188, D260 to H283, and N385 to A404. 2 stretches are compositionally biased toward low complexity: residues A66–T79 and S91–I104. Polar residues-rich tracts occupy residues N105–H114 and Q154–P172. The segment covering S178–S188 has biased composition (low complexity). Positions D260–S274 are enriched in polar residues. The PAS domain maps to D522–G591. The span at N621–A652 shows a compositional bias: low complexity. Residues N621–D659 are disordered.

Belongs to the ERT1/acuK family.

It localises to the nucleus. Its function is as follows. Transcription factor which regulates nonfermentable carbon utilization. The sequence is that of Glucose starvation modulator protein 1 (GSM1) from Lodderomyces elongisporus (strain ATCC 11503 / CBS 2605 / JCM 1781 / NBRC 1676 / NRRL YB-4239) (Yeast).